The following is a 959-amino-acid chain: Probable serine/threonine-protein kinase DDB_G0291664 (959 aa).

The interval 154–213 (QQQQQQQLTPPPSPPLLPIPQPPAQNEEQQLTQPPSIPPPQQKQIKIQKSDRGTQVKSIT) is disordered. Pro residues predominate over residues 162 to 176 (TPPPSPPLLPIPQPP). ANK repeat units follow at residues 294 to 324 (KGET…CMGI) and 333 to 362 (LNKN…PLKM). Residues 482-762 (IDFHTQIGSA…EVGIIETEFL (281 aa)) enclose the Protein kinase domain. ATP contacts are provided by residues 488–496 (IGSAGNASV) and K509. D610 (proton acceptor) is an active-site residue. The disordered stretch occupies residues 904 to 959 (NNINNNNNNNNNCNNSKKFKTTSESTSALGSDASSSSSPSSSSPSPKYSASIYHHQ).

Belongs to the protein kinase superfamily. Ser/Thr protein kinase family.

It catalyses the reaction L-seryl-[protein] + ATP = O-phospho-L-seryl-[protein] + ADP + H(+). It carries out the reaction L-threonyl-[protein] + ATP = O-phospho-L-threonyl-[protein] + ADP + H(+). The chain is Probable serine/threonine-protein kinase DDB_G0291664 from Dictyostelium discoideum (Social amoeba).